The following is a 156-amino-acid chain: Endogenous retrovirus group K member 113 Pro protein (156 aa).

The 76-residue stretch at 21–96 (FEGLVDTGAD…IPLNLWGRDL (76 aa)) folds into the Peptidase A2 domain. Residue Asp26 is part of the active site. Residues 111–156 (YSPTSQKIMTKMGYIPGKGLGKNEDGIKIPVEAKINQKREGIGYPF) enclose the G-patch domain.

The protein belongs to the peptidase A2 family. HERV class-II K(HML-2) subfamily. As to quaternary structure, active as a homodimer. Post-translationally, autoproteolytically processed at the N-terminus. Expected C-terminal autoprocessing not detected. The sequence shown is that of the processed Pro protein.

It carries out the reaction Processing at the authentic HIV-1 PR recognition site and release of the mature p17 matrix and the p24 capsid protein, as a result of the cleavage of the -SQNY-|-PIVQ- cleavage site.. Its function is as follows. Retroviral proteases have roles in the processing of the primary translation products and the maturation of the viral particle. Endogenous Pro proteins may have kept, lost or modified their original function during evolution. The sequence is that of Endogenous retrovirus group K member 113 Pro protein (HERVK_113) from Homo sapiens (Human).